A 458-amino-acid polypeptide reads, in one-letter code: Protein RICE SALT SENSITIVE 3 (458 aa).

A compositionally biased stretch (gly residues) spans 1–17 (MVGSGAAGGGGGGGGGG). 4 disordered regions span residues 1–21 (MVGS…DHAR), 220–325 (TSPS…PEGD), 354–374 (GGGA…GHGG), and 386–458 (SHSN…TFLE). Over residues 220–232 (TSPSPSSFPLKQQ) the composition is skewed to low complexity. Residues 245–262 (HAPPQLPPGASPLFPPGP) are compositionally biased toward pro residues. Low complexity predominate over residues 308–317 (QQPMAAPQQH). Over residues 413–436 (SSSTTSTSPSVSASTAPAPPQQQQ) the composition is skewed to low complexity.

As to quaternary structure, interacts with BHLH094, BHLH089, TIFY11A/JAZ9 and TIFY11C/JAZ11. Forms a ternary complex with TIFY11A/JAZ9 and BHLH094 in the nucleus. In terms of tissue distribution, expressed in root tips. Expressed at high levels in the meristematic zone and at low levels in the elongation zone of the root tip.

Its subcellular location is the nucleus. It localises to the cytoplasm. Functionally, involved in the repression of jasmonate (JA)-induced genes. Forms a ternary complex with TIFY11A/JAZ9 and BHLH094 to negatively regulate JA-responsive genes. Involved in transcriptional regulation in the root tip. Plays a regulatory role in root cell elongation. Regulates root cell elongation during salt stress. This Oryza sativa subsp. japonica (Rice) protein is Protein RICE SALT SENSITIVE 3.